The sequence spans 491 residues: Cobyric acid synthase (491 aa).

The GATase cobBQ-type domain maps to Gln250–Ala437. The Nucleophile role is filled by Cys331. His429 is an active-site residue.

It belongs to the CobB/CobQ family. CobQ subfamily.

The protein operates within cofactor biosynthesis; adenosylcobalamin biosynthesis. In terms of biological role, catalyzes amidations at positions B, D, E, and G on adenosylcobyrinic A,C-diamide. NH(2) groups are provided by glutamine, and one molecule of ATP is hydrogenolyzed for each amidation. The sequence is that of Cobyric acid synthase from Xanthomonas axonopodis pv. citri (strain 306).